The chain runs to 183 residues: Protein Syd (183 aa).

The protein belongs to the Syd family.

Its subcellular location is the cell inner membrane. In terms of biological role, interacts with the SecY protein in vivo. May bind preferentially to an uncomplexed state of SecY, thus functioning either as a chelating agent for excess SecY in the cell or as a regulatory factor that negatively controls the translocase function. This is Protein Syd from Aliivibrio fischeri (strain ATCC 700601 / ES114) (Vibrio fischeri).